The sequence spans 71 residues: Plasticin-C2 (71 aa).

A signal peptide spans 1 to 22; it reads MAFLKKSLLLVLFLALVPLSIC. A propeptide spanning residues 23–45 is cleaved from the precursor; that stretch reads EEEKREEEDEEKQEDDDQSENKR. Positions 25–46 are disordered; it reads EKREEEDEEKQEDDDQSENKRG. A compositionally biased stretch (acidic residues) spans 26–40; it reads KREEEDEEKQEDDDQ. An Asparagine amide modification is found at Asn68. Positions 70–71 are excised as a propeptide; sequence ES.

It belongs to the frog skin active peptide (FSAP) family. Plasticin subfamily. As to expression, expressed by the skin glands.

The protein localises to the secreted. Its subcellular location is the target cell membrane. Neutral peptide with no antimicrobial activity. May act in synergy with cationic peptides by enhancing their activity. Has a moderate hemolytic activity. The polypeptide is Plasticin-C2 (Agalychnis callidryas (Red-eyed tree frog)).